A 385-amino-acid chain; its full sequence is Proteinase-activated receptor 4 (385 aa).

The signal sequence occupies residues 1–17; it reads MWGRLLLWPLVLGFSLS. Positions 18-47 are cleaved as a propeptide — removed for receptor activation; that stretch reads GGTQTPSVYDESGSTGGGDDSTPSILPAPR. The tract at residues 21–42 is disordered; that stretch reads QTPSVYDESGSTGGGDDSTPSI. Residues 48-82 lie on the Extracellular side of the membrane; sequence GYPGQVCANDSDTLELPDSSRALLLGWVPTRLVPA. N56 carries N-linked (GlcNAc...) asparagine glycosylation. A helical transmembrane segment spans residues 83–103; that stretch reads LYGLVLVVGLPANGLALWVLA. At 104-108 the chain is on the cytoplasmic side; the sequence is TQAPR. The helical transmembrane segment at 109-129 threads the bilayer; that stretch reads LPSTMLLMNLAAADLLLALAL. The Extracellular segment spans residues 130–151; it reads PPRIAYHLRGQRWPFGEAACRL. A disulfide bridge links C149 with C228. Residues 152-172 form a helical membrane-spanning segment; it reads ATAALYGHMYGSVLLLAAVSL. At 173–192 the chain is on the cytoplasmic side; sequence DRYLALVHPLRARALRGRRL. Residues 193 to 213 traverse the membrane as a helical segment; that stretch reads ALGLCMAAWLMAAALALPLTL. At 214-247 the chain is on the extracellular side; the sequence is QRQTFRLARSDRVLCHDALPLDAQASHWQPAFTC. A helical membrane pass occupies residues 248 to 268; it reads LALLGCFLPLLAMLLCYGATL. Topologically, residues 269–283 are cytoplasmic; that stretch reads HTLAASGRRYGHALR. Residues 284–304 traverse the membrane as a helical segment; it reads LTAVVLASAVAFFVPSNLLLL. Topologically, residues 305 to 319 are extracellular; that stretch reads LHYSDPSPSAWGNLY. A helical membrane pass occupies residues 320–343; sequence GAYVPSLALSTLNSCVDPFIYYYV. At 344–385 the chain is on the cytoplasmic side; it reads SAEFRDKVRAGLFQRSPGDTVASKASAEGGSRGMGTHSSLLQ. Positions 362 to 385 are disordered; it reads DTVASKASAEGGSRGMGTHSSLLQ.

Belongs to the G-protein coupled receptor 1 family. Post-translationally, a proteolytic cleavage generates a new N-terminus that functions as a tethered ligand. In terms of tissue distribution, widely expressed, with highest levels in lung, pancreas, thyroid, testis and small intestine. Not expressed in brain, kidney, spinal cord and peripheral blood leukocytes. Also detected in platelets.

Its subcellular location is the cell membrane. Activated upon interaction by mucunain, a cowhage (Mucuna pruriens) plant cysteine proteinase. Functionally, receptor for activated thrombin or trypsin coupled to G proteins that stimulate phosphoinositide hydrolysis. May play a role in platelets activation. The chain is Proteinase-activated receptor 4 (F2RL3) from Homo sapiens (Human).